The following is a 492-amino-acid chain: MANYFNTLNLRQKLDQLGRCRFMDREEFADEANFLKGKKIVIVGCGAQGLNQGLNMRDSGLDISYALRPEAIAEKRASFQRATENGFKVGTYEELIPTADLVVNLTPDKQHSKVVADVMPLMKKDSAFGYSHGFNIVEVGEEIRKDITVVMVAPKCPGTEVREEYKRGFGVPTLIAVHPENDPKGEGMAIAKAWAAATGGHKAGVLESSFVAEVKSDLMGEQTILCGMLQAGSIVCYDKLVADGKDPAYAGKLIQYGWETITEALKQGGITLMMDRLSNSAKLRAFELAEQIKESLGFLYYKHMDDIISGHFSATMMADWANGDKDLFAWREATGKTAFENAPKYDGKISEQEYFDNGVLMIAMVKAGVELAFDAMVASGIYEESAYYESLHELPLIANTIARKRLYEMNVVISDTAEYGNYLFSNVATPILAKEIIPNLQKGDLGEPTPAVEVDNITLRDVNDAIRNHPVELIGQELRGYMTDMKRIAVAG.

Residues 14–208 (LDQLGRCRFM…GGHKAGVLES (195 aa)) form the KARI N-terminal Rossmann domain. NADP(+) is bound by residues 45–48 (CGAQ), Arg-68, Arg-76, Ser-78, and 108–110 (DKQ). His-132 is a catalytic residue. Gly-158 contacts NADP(+). 2 KARI C-terminal knotted domains span residues 209–344 (SFVA…NAPK) and 345–485 (YDGK…MTDM). Residues Asp-217, Glu-221, Glu-389, and Glu-393 each coordinate Mg(2+). Ser-414 is a binding site for substrate.

Belongs to the ketol-acid reductoisomerase family. Requires Mg(2+) as cofactor.

It carries out the reaction (2R)-2,3-dihydroxy-3-methylbutanoate + NADP(+) = (2S)-2-acetolactate + NADPH + H(+). The enzyme catalyses (2R,3R)-2,3-dihydroxy-3-methylpentanoate + NADP(+) = (S)-2-ethyl-2-hydroxy-3-oxobutanoate + NADPH + H(+). It participates in amino-acid biosynthesis; L-isoleucine biosynthesis; L-isoleucine from 2-oxobutanoate: step 2/4. Its pathway is amino-acid biosynthesis; L-valine biosynthesis; L-valine from pyruvate: step 2/4. Functionally, involved in the biosynthesis of branched-chain amino acids (BCAA). Catalyzes an alkyl-migration followed by a ketol-acid reduction of (S)-2-acetolactate (S2AL) to yield (R)-2,3-dihydroxy-isovalerate. In the isomerase reaction, S2AL is rearranged via a Mg-dependent methyl migration to produce 3-hydroxy-3-methyl-2-ketobutyrate (HMKB). In the reductase reaction, this 2-ketoacid undergoes a metal-dependent reduction by NADPH to yield (R)-2,3-dihydroxy-isovalerate. This is Ketol-acid reductoisomerase (NADP(+)) from Haemophilus influenzae (strain PittEE).